Consider the following 503-residue polypeptide: GTPase Obg (503 aa).

Positions 2–159 (PQFVDRVVLH…KDVILELKSM (158 aa)) constitute an Obg domain. The region spanning 160–340 (ADVGLVGFPS…LKYALMDIVK (181 aa)) is the OBG-type G domain. Residues 166–173 (GFPSAGKS), 191–195 (FTTLV), 212–215 (DVPG), 292–295 (NKMD), and 321–323 (STV) each bind GTP. Residues serine 173 and threonine 193 each contribute to the Mg(2+) site. Positions 371 to 444 (EFEVEADPSA…IGEITFEWDP (74 aa)) constitute an OCT domain. Positions 457 to 476 (RGTDVRLEQNTRATPEERKR) are enriched in basic and acidic residues. Residues 457–503 (RGTDVRLEQNTRATPEERKRASQARRGLIDENDFGDGEVAERERWQG) are disordered.

This sequence belongs to the TRAFAC class OBG-HflX-like GTPase superfamily. OBG GTPase family. In terms of assembly, monomer. Mg(2+) is required as a cofactor.

The protein resides in the cytoplasm. Its function is as follows. An essential GTPase which binds GTP, GDP and possibly (p)ppGpp with moderate affinity, with high nucleotide exchange rates and a fairly low GTP hydrolysis rate. Plays a role in control of the cell cycle, stress response, ribosome biogenesis and in those bacteria that undergo differentiation, in morphogenesis control. This Corynebacterium jeikeium (strain K411) protein is GTPase Obg.